A 157-amino-acid polypeptide reads, in one-letter code: Beta-defensin 125 (157 aa).

The N-terminal stretch at 1–20 (MNLLMLTFIICGLLTQVTKG) is a signal peptide. 3 disulfides stabilise this stretch: Cys27–Cys55, Cys35–Cys49, and Cys39–Cys56. Positions 109 to 157 (GETITPETNTPETTMPPSETTSSKTTMPPSETATSETMPPPSQTALTHN) are disordered. The span at 110–140 (ETITPETNTPETTMPPSETTSSKTTMPPSET) shows a compositional bias: low complexity. The span at 141-157 (ATSETMPPPSQTALTHN) shows a compositional bias: polar residues.

This sequence belongs to the beta-defensin family.

It is found in the secreted. Functionally, has antibacterial activity. This chain is Beta-defensin 125 (DEFB125), found in Pongo pygmaeus (Bornean orangutan).